Reading from the N-terminus, the 364-residue chain is Paraneoplastic antigen Ma2 (364 aa).

The residue at position 2 (alanine 2) is an N-acetylalanine. The segment covering 335–351 (EEEEASFENESIEEPEE) has biased composition (acidic residues). The tract at residues 335 to 364 (EEEEASFENESIEEPEERDGYGRWNHEGDD) is disordered. Residues 352–364 (RDGYGRWNHEGDD) are compositionally biased toward basic and acidic residues.

It belongs to the PNMA family. In terms of tissue distribution, brain-specific. In some cancer patients, specifically expressed by testicular tumor cells.

The protein localises to the nucleus. The protein resides in the nucleolus. This Homo sapiens (Human) protein is Paraneoplastic antigen Ma2 (PNMA2).